The following is a 564-amino-acid chain: Nucleoprotein (564 aa).

The segment at 54–236 (LRKNKRGEED…VTKDESSINI (183 aa)) is binding site for the cap structure m7GTP. Residues Asp380 and Glu382 each contribute to the Mn(2+) site. The Zn(2+) site is built by Glu390, Cys497, His500, and Cys525. Residue Asp529 participates in Mn(2+) binding.

This sequence belongs to the arenaviridae nucleocapsid protein family. Homomultimerizes to form the nucleocapsid. Binds to viral genomic RNA. Interacts with glycoprotein G2. Interacts with protein Z; this interaction probably directs the encapsidated genome to budding sites. Interacts with protein L; this interaction does not interfere with Z-L interaction. Interacts with host IKBKE (via Protein kinase domain); the interaction inhibits IKBKE kinase activity.

The protein localises to the virion. It is found in the host cytoplasm. Its function is as follows. Encapsidates the genome, protecting it from nucleases. The encapsidated genomic RNA is termed the nucleocapsid (NC). Serves as template for viral transcription and replication. The increased presence of protein N in host cell does not seem to trigger the switch from transcription to replication as observed in other negative strain RNA viruses. Through the interaction with host IKBKE, strongly inhibits the phosphorylation and nuclear translocation of host IRF3, a protein involved in interferon activation pathway, leading to the inhibition of interferon-beta and IRF3-dependent promoters activation. Also encodes a functional 3'-5' exoribonuclease that degrades preferentially dsRNA substrates and thereby participates in the suppression of interferon induction. The polypeptide is Nucleoprotein (Calomys callosus (Large vesper mouse)).